The primary structure comprises 81 residues: QDLPHVDPATDPTAQALKYSEDAANADRAAAARPGKPPEEQFCHNCQFVLADSGEWRPCSLFPGKAVHETGWCASWTLKAG.

[4Fe-4S] cluster-binding residues include cysteine 43, cysteine 46, cysteine 59, and cysteine 73.

Belongs to the high-potential iron-sulfur protein (HiPIP) family. In terms of assembly, homodimer.

The protein localises to the periplasm. In terms of biological role, specific class of high-redox-potential 4Fe-4S ferredoxins. Functions in anaerobic electron transport in most purple and in some other photosynthetic bacteria and in at least one genus (Paracoccus) of halophilic, denitrifying bacteria. This Halochromatium salexigens (Chromatium salexigens) protein is High-potential iron-sulfur protein.